The chain runs to 122 residues: Small ribosomal subunit protein uS12c (122 aa).

The protein belongs to the universal ribosomal protein uS12 family. In terms of assembly, part of the 30S ribosomal subunit.

The protein localises to the plastid. It is found in the chloroplast. With S4 and S5 plays an important role in translational accuracy. Located at the interface of the 30S and 50S subunits. The chain is Small ribosomal subunit protein uS12c (rps12) from Mesostigma viride (Green alga).